Consider the following 348-residue polypeptide: Dihydroorotase (348 aa).

His14 and His16 together coordinate Zn(2+). Residues 16 to 18 (HLR) and Asn42 contribute to the substrate site. Residues Lys100, His137, and His175 each coordinate Zn(2+). Lys100 is modified (N6-carboxylysine). His137 lines the substrate pocket. Leu220 provides a ligand contact to substrate. Residue Asp248 participates in Zn(2+) binding. Asp248 is an active-site residue. Substrate contacts are provided by His252 and Ala264.

This sequence belongs to the metallo-dependent hydrolases superfamily. DHOase family. Class II DHOase subfamily. Homodimer. Requires Zn(2+) as cofactor.

It carries out the reaction (S)-dihydroorotate + H2O = N-carbamoyl-L-aspartate + H(+). It participates in pyrimidine metabolism; UMP biosynthesis via de novo pathway; (S)-dihydroorotate from bicarbonate: step 3/3. Its function is as follows. Catalyzes the reversible cyclization of carbamoyl aspartate to dihydroorotate. In Pseudomonas entomophila (strain L48), this protein is Dihydroorotase.